The primary structure comprises 322 residues: tRNA dimethylallyltransferase (322 aa).

21–28 (GQTAVGKT) provides a ligand contact to ATP. 23 to 28 (TAVGKT) contacts substrate. Positions 46–49 (DSGC) are interaction with substrate tRNA.

The protein belongs to the IPP transferase family. As to quaternary structure, monomer. Mg(2+) serves as cofactor.

It catalyses the reaction adenosine(37) in tRNA + dimethylallyl diphosphate = N(6)-dimethylallyladenosine(37) in tRNA + diphosphate. Functionally, catalyzes the transfer of a dimethylallyl group onto the adenine at position 37 in tRNAs that read codons beginning with uridine, leading to the formation of N6-(dimethylallyl)adenosine (i(6)A). This chain is tRNA dimethylallyltransferase, found in Wigglesworthia glossinidia brevipalpis.